We begin with the raw amino-acid sequence, 166 residues long: NAD(P)H-quinone oxidoreductase subunit I, chloroplastic (166 aa).

2 4Fe-4S ferredoxin-type domains span residues 55 to 84 (GRIHFEFDKCIACEVCVRVCPIDLPVVDWK) and 95 to 124 (LNYSIDFGICIFCGNCVEYCPTNCLSMTEE). [4Fe-4S] cluster is bound by residues Cys64, Cys67, Cys70, Cys74, Cys104, Cys107, Cys110, and Cys114.

Belongs to the complex I 23 kDa subunit family. As to quaternary structure, NDH is composed of at least 16 different subunits, 5 of which are encoded in the nucleus. [4Fe-4S] cluster serves as cofactor.

The protein resides in the plastid. The protein localises to the chloroplast thylakoid membrane. The enzyme catalyses a plastoquinone + NADH + (n+1) H(+)(in) = a plastoquinol + NAD(+) + n H(+)(out). It catalyses the reaction a plastoquinone + NADPH + (n+1) H(+)(in) = a plastoquinol + NADP(+) + n H(+)(out). Its function is as follows. NDH shuttles electrons from NAD(P)H:plastoquinone, via FMN and iron-sulfur (Fe-S) centers, to quinones in the photosynthetic chain and possibly in a chloroplast respiratory chain. The immediate electron acceptor for the enzyme in this species is believed to be plastoquinone. Couples the redox reaction to proton translocation, and thus conserves the redox energy in a proton gradient. The protein is NAD(P)H-quinone oxidoreductase subunit I, chloroplastic of Hulsea algida (Pacific hulsea).